We begin with the raw amino-acid sequence, 296 residues long: Acetylglutamate kinase (296 aa).

Substrate-binding positions include 67 to 68, R89, and N194; that span reads GG.

This sequence belongs to the acetylglutamate kinase family. ArgB subfamily.

It is found in the cytoplasm. The catalysed reaction is N-acetyl-L-glutamate + ATP = N-acetyl-L-glutamyl 5-phosphate + ADP. The protein operates within amino-acid biosynthesis; L-arginine biosynthesis; N(2)-acetyl-L-ornithine from L-glutamate: step 2/4. Functionally, catalyzes the ATP-dependent phosphorylation of N-acetyl-L-glutamate. This chain is Acetylglutamate kinase, found in Brucella canis (strain ATCC 23365 / NCTC 10854 / RM-666).